Consider the following 361-residue polypeptide: Peptide chain release factor 1 (361 aa).

An N5-methylglutamine modification is found at Gln-237. The tract at residues Ala-286–Ser-306 is disordered.

This sequence belongs to the prokaryotic/mitochondrial release factor family. In terms of processing, methylated by PrmC. Methylation increases the termination efficiency of RF1.

It localises to the cytoplasm. Its function is as follows. Peptide chain release factor 1 directs the termination of translation in response to the peptide chain termination codons UAG and UAA. The protein is Peptide chain release factor 1 of Coxiella burnetii (strain CbuK_Q154) (Coxiella burnetii (strain Q154)).